We begin with the raw amino-acid sequence, 235 residues long: Small ribosomal subunit protein eS6 (235 aa).

Ser-229 and Ser-230 each carry phosphoserine.

Belongs to the eukaryotic ribosomal protein eS6 family. Post-translationally, phosphorylated.

This chain is Small ribosomal subunit protein eS6 (RPS6), found in Kluyveromyces marxianus (Yeast).